Consider the following 389-residue polypeptide: MVTVEEVRKAQRAEGPATILAIGTATPPNYVDQSTYPDFYFRVTNSEHKKELKAKFQRMCDNSQIKKRYMHLTEEILKENPNICAYMAPSLDARQDMVVVEIPKLGKEAATRAIKEWGQPKSKITHLVFCTTSGVDMPGADYQLTKLLGLRPSVKRLMMYQQGCFAGGTVLRLAKDLAENNKGARVLVVCSEITAVTFRGPSDTHLDSLVGQALFGDGAAAVIIGSDPMPEVEKPLFEIVSAAQTILPDSDGAIDGHLREVGLTFHLLKDVPGLISKNIEKSLVEAFRPLDISDWNSIFWIAHPGGPAILDQVEKKLALKPEKLRATRNVLSDYGNMSSACVLFIMDEMRKNSAEEGLMTTGEGLEWGVLFGFGPGLTVETVVLHGVST.

C164 is an active-site residue.

Belongs to the thiolase-like superfamily. Chalcone/stilbene synthases family.

The enzyme catalyses (E)-4-coumaroyl-CoA + 3 malonyl-CoA + 3 H(+) = 2',4,4',6'-tetrahydroxychalcone + 3 CO2 + 4 CoA. It functions in the pathway secondary metabolite biosynthesis; flavonoid biosynthesis. Its function is as follows. The primary product of this enzyme is 4,2',4',6'-tetrahydroxychalcone (also termed naringenin-chalcone or chalcone) which can under specific conditions spontaneously isomerize into naringenin. This is Chalcone synthase (CHS) from Hydrangea macrophylla (Bigleaf hydrangea).